Reading from the N-terminus, the 317-residue chain is Non-structural protein 2 (317 aa).

ATP-binding positions include 107 to 109 (SVR), K188, and 221 to 223 (HGK). An RNA-binding region spans residues 205–241 (LIAELRWQYNKFAVITHGKGHYRVVKYSSVANHADRV). The active-site For NTPase and RTPase activities is the H225. An ATP-binding site is contributed by R227.

Belongs to the rotavirus NSP2 family. In terms of assembly, homooctamer. Interacts with VP1; this interaction is weak. Interacts with NSP5; this interaction leads to up-regulation of NSP5 phosphorylation and formation of viral factories. Interacts with host DCP1A, DCP1B, DDX6, EDC4 and EIF2S1/eIF2-alpha; these interactions are probably part of the sequestration of some host SGs and PBs proteins in viral factories. Requires Mg(2+) as cofactor.

Its subcellular location is the host cytoplasm. Its function is as follows. Participates in replication and packaging of the viral genome. Plays a crucial role, together with NSP5, in the formation of virus factories (viroplasms), which are large inclusions in the host cytoplasm where replication intermediates are assembled and viral RNA replication takes place. Displays ssRNA binding, NTPase, RNA triphosphatase (RTPase) and ATP-independent helix-unwinding activities. The unwinding activity may prepare and organize plus-strand RNAs for packaging and replication by removing interfering secondary structures. The RTPase activity plays a role in the removal of the gamma-phosphate from the rotavirus RNA minus strands of dsRNA genome segments. Participates in the selective exclusion of host proteins from stress granules (SG) and P bodies (PB). Also participates in the sequestration of these remodeled organelles in viral factories. In Rotavirus A (strain RVA/Cow/United Kingdom/UK/1975/G6P7[5]) (RV-A), this protein is Non-structural protein 2.